We begin with the raw amino-acid sequence, 276 residues long: Large ribosomal subunit protein uL2 (276 aa).

The interval 219-268 (TVRGSVMNPNDHPHGGGEGRQPVGRKSPMTPWGKPALGLKTRNKKAKSSK) is disordered.

This sequence belongs to the universal ribosomal protein uL2 family. In terms of assembly, part of the 50S ribosomal subunit. Forms a bridge to the 30S subunit in the 70S ribosome.

In terms of biological role, one of the primary rRNA binding proteins. Required for association of the 30S and 50S subunits to form the 70S ribosome, for tRNA binding and peptide bond formation. It has been suggested to have peptidyltransferase activity; this is somewhat controversial. Makes several contacts with the 16S rRNA in the 70S ribosome. The chain is Large ribosomal subunit protein uL2 from Lactococcus lactis subsp. cremoris (strain MG1363).